The chain runs to 64 residues: Ferredoxin-like protein in nif region (64 aa).

One can recognise a 4Fe-4S ferredoxin-type domain in the interval 2–30 (AFKIIASQCTQCGACEFECPSGAISFKTD). 8 residues coordinate [4Fe-4S] cluster: C10, C13, C16, C20, C39, C42, C51, and C55.

The cofactor is [4Fe-4S] cluster.

The protein is Ferredoxin-like protein in nif region (fdxN) of Rhizobium leguminosarum bv. trifolii.